The primary structure comprises 629 residues: Embryonic polyadenylate-binding protein (629 aa).

4 consecutive RRM domains span residues 11–89 (ASLY…WSQR), 99–175 (GNVF…HFKS), 191–268 (TNVY…RAQK), and 294–370 (VNLY…LAQR). One can recognise a PABC domain in the interval 539 to 616 (QEPLTASSLA…AVAVLQAHQA (78 aa)).

The protein belongs to the polyadenylate-binding protein type-1 family. In terms of assembly, interacts with dazl in an RNA-independent manner. The C-terminus can self-associate and also interact with the C-terminus of pabpc1, independently of RNA. RRM 1 and RRM 2 interact with both eif4g1 and paip1, and the C-terminus also interacts with paip1. Prior to oocyte maturation, found in a complex with dazl and pum2 proteins and spdy1 mRNA; pum2 dissociates from the complex during maturation. Interacts with the translation termination factor sup35/erf3.

It is found in the cytoplasm. Its function is as follows. Binds and protects the poly(A) tail of mRNA with or without an AU-rich element (ARE) and prevents mRNA deadenylation. Stimulates the translation of mRNAs to which it is bound during early development. This Xenopus tropicalis (Western clawed frog) protein is Embryonic polyadenylate-binding protein.